A 90-amino-acid polypeptide reads, in one-letter code: DNA-binding protein HTa (90 aa).

The protein belongs to the bacterial histone-like protein family. As to quaternary structure, homotetramer.

Its function is as follows. Histone-like DNA-binding protein which is capable of wrapping DNA to stabilize it, and thus to prevent its denaturation under extreme environmental conditions. This chain is DNA-binding protein HTa, found in Thermoplasma acidophilum (strain ATCC 25905 / DSM 1728 / JCM 9062 / NBRC 15155 / AMRC-C165).